Reading from the N-terminus, the 437-residue chain is GTPase HflX (437 aa).

The tract at residues 150–173 (DRQGGGSGGGKGGGGAARGEGEKQ) is disordered. Gly residues predominate over residues 152 to 167 (QGGGSGGGKGGGGAAR). A Hflx-type G domain is found at 212–382 (ATAAIVGYTN…ACVEMLESRV (171 aa)). GTP-binding positions include 218–225 (GYTNAGKS), 243–247 (FATLD), 265–268 (DTVG), 331–334 (NKVD), and 360–362 (SVK). 2 residues coordinate Mg(2+): Ser-225 and Thr-245.

The protein belongs to the TRAFAC class OBG-HflX-like GTPase superfamily. HflX GTPase family. In terms of assembly, monomer. Associates with the 50S ribosomal subunit. Mg(2+) is required as a cofactor.

Its subcellular location is the cytoplasm. In terms of biological role, GTPase that associates with the 50S ribosomal subunit and may have a role during protein synthesis or ribosome biogenesis. The protein is GTPase HflX of Akkermansia muciniphila (strain ATCC BAA-835 / DSM 22959 / JCM 33894 / BCRC 81048 / CCUG 64013 / CIP 107961 / Muc).